The following is a 648-amino-acid chain: 60 kDa heat shock protein homolog 1, mitochondrial (648 aa).

A mitochondrion-targeting transit peptide spans 1–55 (MFRSCVPKAITSSRCFARMYSKDVRFGSGVRAMMIRGVDILADAVAVTMGPKGRS).

This sequence belongs to the chaperonin (HSP60) family.

Its subcellular location is the mitochondrion matrix. In terms of biological role, prevents misfolding and promotes the refolding and proper assembly of unfolded polypeptides generated under stress conditions. The sequence is that of 60 kDa heat shock protein homolog 1, mitochondrial (Hsp60B) from Drosophila melanogaster (Fruit fly).